An 840-amino-acid polypeptide reads, in one-letter code: Telomere length regulation protein TEL2 homolog (840 aa).

Met1 bears the N-acetylmethionine mark. A hydroxyproline mark is found at Pro374, Pro419, and Pro422. Residues 443–497 (PEPAGDCSSVSRGPSPAPVDTESPVEMPEKAVESDVPPTQPQGSDSELDSDDEFI) form a disordered region. Phosphoserine is present on Ser457. A Phosphoserine; by CK2 modification is found at Ser486. 3 positions are modified to phosphoserine: Ser488, Ser492, and Ser837. The span at 488–497 (SELDSDDEFI) shows a compositional bias: acidic residues.

It belongs to the TEL2 family. As to quaternary structure, component of the TTT complex composed of TELO2, TTI1 and TTI2. Interacts with ATM, ATR, MTOR, PRKDC, RUVBL2, TTI1, TTI2, SMG1 and TRRAP. Component of the mTORC1 and mTORC2 complexes. Interacts (phosphorylated form) with PIH1D1. Interaction with PIH1D1 mediates interaction of TELO2 with the R2TP complex composed of RUVBL1, RUVBL2, PIH1D1, and RPAP3. In terms of processing, hydroxylation by PHD3 is required for a proper interaction with ATR, and activation of the ATR/CHK1/p53 pathway following DNA damage. Phosphorylated at Ser-486 by CK2 following growth factor deprivation, leading to its subsequent ubiquitination by the SCF(FBXO9) complex. Phosphorylation by CK2 only takes place when TELO2 is bound to mTORC1, not mTORC2; leading to selective ubiquitination of mTORC1-associated protein. Post-translationally, ubiquitinated by the SCF(FBXO9) complex following phosphorylation by CK2 in response to growth factor deprivation, leading to its degradation by the proteasome. Only mTORC1-associated protein is ubiquitinated and degraded, leading to selective inactivation of mTORC1 to restrain cell growth and protein translation, while mTORC2 is activated due to the relief of feedback inhibition by mTORC1.

Its subcellular location is the cytoplasm. The protein resides in the membrane. It is found in the nucleus. It localises to the chromosome. The protein localises to the telomere. In terms of biological role, regulator of the DNA damage response (DDR). Part of the TTT complex that is required to stabilize protein levels of the phosphatidylinositol 3-kinase-related protein kinase (PIKK) family proteins. The TTT complex is involved in the cellular resistance to DNA damage stresses, like ionizing radiation (IR), ultraviolet (UV) and mitomycin C (MMC). Together with the TTT complex and HSP90 may participate in the proper folding of newly synthesized PIKKs. Promotes assembly, stabilizes and maintains the activity of mTORC1 and mTORC2 complexes, which regulate cell growth and survival in response to nutrient and hormonal signals. May be involved in telomere length regulation. This Mus musculus (Mouse) protein is Telomere length regulation protein TEL2 homolog (Telo2).